The primary structure comprises 309 residues: MKKVSVIIFIVIMLGIGCLNLNESIKETCPRTSNITQAMSCYIPEDFEILKGVAEEIPGGTIEWKIWNILEWEEDHLSYDNNKGSDIILKPSEFIKVGEGVCTDYAVLTAGLLLASNISPVYLMIFHFMEDPTLHAAVAVNISGKLFILDQRLPPKNLDSYLIQFSKLEGKIILFAEMYKVEMKKGRVVVSGRKYLDLSNFGFYPGNISLDMLENLLLSEFQRRTNLFPRIDLKTVLPQGLKERKVWMIKFENFKLFYDDTFVEQYSNFIADEILKNEKIKSDISRYSAFWISIKLEGDDLIVRLFLGR.

The next 2 membrane-spanning stretches (helical) occupy residues S5–I25 and A106–F126.

This sequence belongs to the UPF0252 family.

The protein localises to the cell membrane. The sequence is that of UPF0252 protein PH0672 from Pyrococcus horikoshii (strain ATCC 700860 / DSM 12428 / JCM 9974 / NBRC 100139 / OT-3).